The chain runs to 177 residues: NAD(P)H-quinone oxidoreductase subunit 6, chloroplastic (177 aa).

5 helical membrane-spanning segments follow: residues Ile10–Thr30, Pro32–Pro52, Ala61–Met81, Phe92–Ile112, and Phe152–Ala172.

Belongs to the complex I subunit 6 family. As to quaternary structure, NDH is composed of at least 16 different subunits, 5 of which are encoded in the nucleus.

It localises to the plastid. The protein localises to the chloroplast thylakoid membrane. It catalyses the reaction a plastoquinone + NADH + (n+1) H(+)(in) = a plastoquinol + NAD(+) + n H(+)(out). The enzyme catalyses a plastoquinone + NADPH + (n+1) H(+)(in) = a plastoquinol + NADP(+) + n H(+)(out). Functionally, NDH shuttles electrons from NAD(P)H:plastoquinone, via FMN and iron-sulfur (Fe-S) centers, to quinones in the photosynthetic chain and possibly in a chloroplast respiratory chain. The immediate electron acceptor for the enzyme in this species is believed to be plastoquinone. Couples the redox reaction to proton translocation, and thus conserves the redox energy in a proton gradient. The protein is NAD(P)H-quinone oxidoreductase subunit 6, chloroplastic (ndhG) of Nymphaea alba (White water-lily).